A 336-amino-acid chain; its full sequence is Holliday junction branch migration complex subunit RuvB (336 aa).

Positions 1-182 are large ATPase domain (RuvB-L); it reads MKERIVNLET…FGMSFRMQFY (182 aa). ATP contacts are provided by residues leucine 21, arginine 22, glycine 63, lysine 66, threonine 67, serine 68, 129–131, arginine 172, tyrosine 182, and arginine 219; that span reads EDF. Threonine 67 contacts Mg(2+). Residues 183–253 form a small ATPAse domain (RuvB-S) region; the sequence is SPSELALIIK…ITLHALNELG (71 aa). Residues 256–336 form a head domain (RuvB-H) region; the sequence is ELGFDEADLA…IPTLKSQTLF (81 aa). Residues arginine 310 and arginine 315 each coordinate DNA.

The protein belongs to the RuvB family. Homohexamer. Forms an RuvA(8)-RuvB(12)-Holliday junction (HJ) complex. HJ DNA is sandwiched between 2 RuvA tetramers; dsDNA enters through RuvA and exits via RuvB. An RuvB hexamer assembles on each DNA strand where it exits the tetramer. Each RuvB hexamer is contacted by two RuvA subunits (via domain III) on 2 adjacent RuvB subunits; this complex drives branch migration. In the full resolvosome a probable DNA-RuvA(4)-RuvB(12)-RuvC(2) complex forms which resolves the HJ.

It is found in the cytoplasm. The enzyme catalyses ATP + H2O = ADP + phosphate + H(+). Its function is as follows. The RuvA-RuvB-RuvC complex processes Holliday junction (HJ) DNA during genetic recombination and DNA repair, while the RuvA-RuvB complex plays an important role in the rescue of blocked DNA replication forks via replication fork reversal (RFR). RuvA specifically binds to HJ cruciform DNA, conferring on it an open structure. The RuvB hexamer acts as an ATP-dependent pump, pulling dsDNA into and through the RuvAB complex. RuvB forms 2 homohexamers on either side of HJ DNA bound by 1 or 2 RuvA tetramers; 4 subunits per hexamer contact DNA at a time. Coordinated motions by a converter formed by DNA-disengaged RuvB subunits stimulates ATP hydrolysis and nucleotide exchange. Immobilization of the converter enables RuvB to convert the ATP-contained energy into a lever motion, pulling 2 nucleotides of DNA out of the RuvA tetramer per ATP hydrolyzed, thus driving DNA branch migration. The RuvB motors rotate together with the DNA substrate, which together with the progressing nucleotide cycle form the mechanistic basis for DNA recombination by continuous HJ branch migration. Branch migration allows RuvC to scan DNA until it finds its consensus sequence, where it cleaves and resolves cruciform DNA. The chain is Holliday junction branch migration complex subunit RuvB from Helicobacter pylori (strain HPAG1).